The primary structure comprises 289 residues: Serine/threonine-protein phosphatase PGAM5, mitochondrial (289 aa).

Residues 1–6 are Mitochondrial matrix-facing; sequence MAFRQA. Residues 7–29 form a helical membrane-spanning segment; sequence LQLAACGLAGGSAAVLFSAVAVG. At 30–289 the chain is on the mitochondrial intermembrane side; the sequence is KPRAGGDAEP…FMPPDKITRS (260 aa). Positions 32 to 59 are disordered; sequence RAGGDAEPRPAEPPAWAGGARPGPGVWD. A compositionally biased stretch (low complexity) spans 45–56; that stretch reads PAWAGGARPGPG. The interaction with KEAP1 stretch occupies residues 77–82; that stretch reads NVESGE. Phosphoserine occurs at positions 80 and 87. Residues K116, K144, and K191 each carry the N6-acetyllysine modification.

The protein belongs to the phosphoglycerate mutase family. BPG-dependent PGAM subfamily. As to quaternary structure, dimer. Forms a ternary complex with NFE2L2 and KEAP1. Interacts with BCL2L1 and MAP3K5. Upon TNF-induced necrosis, forms in complex with RIPK1, RIPK3 and MLKL; the formation of this complex leads to PGAM5 phosphorylation. Isoform 2, but not isoform 1, interacts with DNM1L; this interaction leads to DNM1L dephosphorylation and activation and eventually to mitochondria fragmentation. In terms of processing, both isoform 1 and isoform 2 are phosphorylated by the RIPK1/RIPK3 complex under necrotic conditions. This phosphorylation increases PGAM5 phosphatase activity. Post-translationally, proteolytically cleaved by PARL in response to loss of mitochondrial membrane potential.

Its subcellular location is the mitochondrion outer membrane. The protein resides in the mitochondrion inner membrane. It carries out the reaction O-phospho-L-seryl-[protein] + H2O = L-seryl-[protein] + phosphate. The catalysed reaction is O-phospho-L-threonyl-[protein] + H2O = L-threonyl-[protein] + phosphate. Mitochondrial serine/threonine phosphatase that dephosphorylates various substrates and thus plays a role in different biological processes including cellular senescence or mitophagy. Modulates cellular senescence by regulating mitochondrial dynamics. Mechanistically, participates in mitochondrial fission through dephosphorylating DNM1L/DRP1. Additionally, dephosphorylates MFN2 in a stress-sensitive manner and consequently protects it from ubiquitination and degradation to promote mitochondrial network formation. Regulates mitophagy independent of PARKIN by interacting with and dephosphorylating FUNDC1, which interacts with LC3. Regulates anti-oxidative response by forming a tertiary complex with KEAP1 and NRF2. Regulates necroptosis by acting as a RIPK3 target and recruiting the RIPK1-RIPK3-MLKL necrosis 'attack' complex to mitochondria. This chain is Serine/threonine-protein phosphatase PGAM5, mitochondrial (PGAM5), found in Homo sapiens (Human).